Consider the following 257-residue polypeptide: UPF0246 protein lpg1366 (257 aa).

This sequence belongs to the UPF0246 family.

In Legionella pneumophila subsp. pneumophila (strain Philadelphia 1 / ATCC 33152 / DSM 7513), this protein is UPF0246 protein lpg1366.